The chain runs to 46 residues: Large ribosomal subunit protein bL36 (46 aa).

The protein belongs to the bacterial ribosomal protein bL36 family.

This is Large ribosomal subunit protein bL36 from Salmonella agona (strain SL483).